We begin with the raw amino-acid sequence, 117 residues long: Tyrosine-protein phosphatase 25 (117 aa).

In terms of domain architecture, Tyrosine-protein phosphatase spans 1 to 117; that stretch reads WLMIIEQKCN…DLIGQSPIVV (117 aa). D85 lines the substrate pocket.

Belongs to the protein-tyrosine phosphatase family.

The enzyme catalyses O-phospho-L-tyrosyl-[protein] + H2O = L-tyrosyl-[protein] + phosphate. The protein is Tyrosine-protein phosphatase 25 (STY-25) of Styela plicata (Wrinkled sea squirt).